Reading from the N-terminus, the 158-residue chain is NAD(P)H-quinone oxidoreductase subunit J, chloroplastic (158 aa).

It belongs to the complex I 30 kDa subunit family. As to quaternary structure, NDH is composed of at least 16 different subunits, 5 of which are encoded in the nucleus.

The protein localises to the plastid. The protein resides in the chloroplast thylakoid membrane. It catalyses the reaction a plastoquinone + NADH + (n+1) H(+)(in) = a plastoquinol + NAD(+) + n H(+)(out). It carries out the reaction a plastoquinone + NADPH + (n+1) H(+)(in) = a plastoquinol + NADP(+) + n H(+)(out). NDH shuttles electrons from NAD(P)H:plastoquinone, via FMN and iron-sulfur (Fe-S) centers, to quinones in the photosynthetic chain and possibly in a chloroplast respiratory chain. The immediate electron acceptor for the enzyme in this species is believed to be plastoquinone. Couples the redox reaction to proton translocation, and thus conserves the redox energy in a proton gradient. The sequence is that of NAD(P)H-quinone oxidoreductase subunit J, chloroplastic from Ranunculus macranthus (Large buttercup).